We begin with the raw amino-acid sequence, 205 residues long: Thiamine-phosphate synthase (205 aa).

Residues 36–40 (QYRRK) and D68 each bind 4-amino-2-methyl-5-(diphosphooxymethyl)pyrimidine. Mg(2+)-binding residues include D69 and D88. S106 is a 4-amino-2-methyl-5-(diphosphooxymethyl)pyrimidine binding site. Position 132 to 134 (132 to 134 (SPT)) interacts with 2-[(2R,5Z)-2-carboxy-4-methylthiazol-5(2H)-ylidene]ethyl phosphate. 4-amino-2-methyl-5-(diphosphooxymethyl)pyrimidine is bound at residue K135. Residues G162 and 182–183 (IS) contribute to the 2-[(2R,5Z)-2-carboxy-4-methylthiazol-5(2H)-ylidene]ethyl phosphate site.

It belongs to the thiamine-phosphate synthase family. Mg(2+) is required as a cofactor.

It carries out the reaction 2-[(2R,5Z)-2-carboxy-4-methylthiazol-5(2H)-ylidene]ethyl phosphate + 4-amino-2-methyl-5-(diphosphooxymethyl)pyrimidine + 2 H(+) = thiamine phosphate + CO2 + diphosphate. The catalysed reaction is 2-(2-carboxy-4-methylthiazol-5-yl)ethyl phosphate + 4-amino-2-methyl-5-(diphosphooxymethyl)pyrimidine + 2 H(+) = thiamine phosphate + CO2 + diphosphate. The enzyme catalyses 4-methyl-5-(2-phosphooxyethyl)-thiazole + 4-amino-2-methyl-5-(diphosphooxymethyl)pyrimidine + H(+) = thiamine phosphate + diphosphate. It participates in cofactor biosynthesis; thiamine diphosphate biosynthesis; thiamine phosphate from 4-amino-2-methyl-5-diphosphomethylpyrimidine and 4-methyl-5-(2-phosphoethyl)-thiazole: step 1/1. Functionally, condenses 4-methyl-5-(beta-hydroxyethyl)thiazole monophosphate (THZ-P) and 2-methyl-4-amino-5-hydroxymethyl pyrimidine pyrophosphate (HMP-PP) to form thiamine monophosphate (TMP). In Caldivirga maquilingensis (strain ATCC 700844 / DSM 13496 / JCM 10307 / IC-167), this protein is Thiamine-phosphate synthase.